A 961-amino-acid chain; its full sequence is Vitamin B12-dependent ribonucleotide reductase (961 aa).

A disordered region spans residues 1 to 23; sequence MTETTSGPARGSRTKGTKATKGL. Substrate contacts are provided by residues serine 143, 159 to 160, glycine 188, 364 to 368, and 554 to 558; these read AC, NPCSE, and PTGTI. Cysteine 160 and cysteine 377 form a disulfide bridge. The active-site Proton acceptor is asparagine 364. Residue cysteine 366 is the Cysteine radical intermediate of the active site. The active-site Proton acceptor is glutamate 368.

The protein belongs to the ribonucleoside diphosphate reductase class-2 family. As to quaternary structure, homotetramer. Adenosylcob(III)alamin is required as a cofactor.

The enzyme catalyses a 2'-deoxyribonucleoside 5'-diphosphate + [thioredoxin]-disulfide + H2O = a ribonucleoside 5'-diphosphate + [thioredoxin]-dithiol. Its function is as follows. Catalyzes the reduction of ribonucleotides to deoxyribonucleotides. May function to provide a pool of deoxyribonucleotide precursors for DNA repair during oxygen limitation and/or for immediate growth after restoration of oxygen. This is Vitamin B12-dependent ribonucleotide reductase (nrdJ) from Streptomyces clavuligerus.